Here is a 252-residue protein sequence, read N- to C-terminus: Bidirectional sugar transporter SWEET3b (252 aa).

The Extracellular segment spans residues 1–8; it reads MVSNTIRV. The chain crosses the membrane as a helical span at residues 9 to 29; sequence AVGILGNAASMLLYAAPILTF. The MtN3/slv 1 domain maps to 10–98; the sequence is VGILGNAASM…SIYTWFAPRE (89 aa). At 30-43 the chain is on the cytoplasmic side; that stretch reads RRVIKKGSVEEFSC. A helical membrane pass occupies residues 44-64; it reads VPYILALFNCLLYTWYGLPVV. At 65 to 75 the chain is on the extracellular side; sequence SSGWENSTVSS. Asparagine 70 is a glycosylation site (N-linked (GlcNAc...) asparagine). Residues 76-96 form a helical membrane-spanning segment; that stretch reads INGLGILLEIAFISIYTWFAP. Residues 97–105 are Cytoplasmic-facing; the sequence is RERKKFVLR. Residues 106–126 traverse the membrane as a helical segment; the sequence is MVLPVLAFFALTAIFSSFLFH. Residues 127–132 are Extracellular-facing; the sequence is THGLRK. Residues 133-153 form a helical membrane-spanning segment; the sequence is VFVGSIGLVASISMYSSPMVA. Residues 134–219 form the MtN3/slv 2 domain; it reads FVGSIGLVAS…LYCIYRKSHK (86 aa). Residues 154–167 lie on the Cytoplasmic side of the membrane; that stretch reads AKQVITTKSVEFMP. Residues 168-188 form a helical membrane-spanning segment; that stretch reads FYLSLFSFLSSALWMIYGLLG. Residues 189–190 are Extracellular-facing; that stretch reads KD. Residues 191–211 form a helical membrane-spanning segment; that stretch reads LFIASPNFIGCPMGILQLVLY. Residues 212–252 lie on the Cytoplasmic side of the membrane; the sequence is CIYRKSHKEAEKLHDIDQENGLKVVTTHEKITGREPEAQRD.

Belongs to the SWEET sugar transporter family. As to quaternary structure, forms homooligomers and/or heterooligomers.

The protein localises to the cell membrane. Its function is as follows. Mediates both low-affinity uptake and efflux of sugar across the plasma membrane. The polypeptide is Bidirectional sugar transporter SWEET3b (SWEET3B) (Oryza sativa subsp. japonica (Rice)).